The primary structure comprises 438 residues: Nudix hydrolase 19, chloroplastic (438 aa).

The N-terminal 36 residues, 1–36, are a transit peptide targeting the chloroplast; the sequence is MLALFLSSSSYPTLSFLSRSVTLNLARTTTLSALTM. Zn(2+) is bound by residues cysteine 212, cysteine 215, cysteine 230, and cysteine 235. Substrate contacts are provided by residues tyrosine 240, 276 to 278, glutamate 292, glutamate 296, and glutamate 342; that span reads AGF. Residues 241–371 form the Nudix hydrolase domain; it reads PRVDPVVIML…EYRKAQRTAA (131 aa). The Mg(2+) site is built by alanine 276, glutamate 292, glutamate 296, and glutamate 342. The short motif at 277–298 is the Nudix box element; it reads GFIEPGESLEEAVRRETWEETG. A Microbody targeting signal motif is present at residues 422-424; it reads PDD.

Belongs to the Nudix hydrolase family. NudC subfamily. The cofactor is Mg(2+). Zn(2+) serves as cofactor. Expressed in roots, leaves, stems and inflorescences.

It is found in the plastid. Its subcellular location is the chloroplast. It catalyses the reaction a 5'-end NAD(+)-phospho-ribonucleoside in mRNA + H2O = a 5'-end phospho-adenosine-phospho-ribonucleoside in mRNA + beta-nicotinamide D-ribonucleotide + 2 H(+). The catalysed reaction is NAD(+) + H2O = beta-nicotinamide D-ribonucleotide + AMP + 2 H(+). It carries out the reaction NADH + H2O = reduced beta-nicotinamide D-ribonucleotide + AMP + 2 H(+). MRNA decapping enzyme that specifically removes the nicotinamide adenine dinucleotide (NAD) cap from a subset of mRNAs by hydrolyzing the diphosphate linkage to produce nicotinamide mononucleotide (NMN) and 5' monophosphate mRNA. The NAD-cap is present at the 5'-end of some RNAs; in contrast to the canonical N7 methylguanosine (m7G) cap, the NAD cap promotes mRNA decay. Mediates the hydrolysis of some nucleoside diphosphate derivatives. Has a high affinity for NADPH compared with that for NADH. The sequence is that of Nudix hydrolase 19, chloroplastic (NUDT19) from Arabidopsis thaliana (Mouse-ear cress).